We begin with the raw amino-acid sequence, 265 residues long: Mlc titration factor A (265 aa).

The Zn(2+) site is built by histidine 111, histidine 148, histidine 152, and glutamate 211.

Belongs to the MtfA family. Interacts with Mlc. It depends on Zn(2+) as a cofactor.

It is found in the cytoplasm. In terms of biological role, involved in the modulation of the activity of the glucose-phosphotransferase system (glucose-PTS). Interacts with the transcriptional repressor Mlc, preventing its interaction with DNA and leading to the modulation of expression of genes regulated by Mlc, including ptsG, which encodes the PTS system glucose-specific EIICB component. Functionally, shows zinc-dependent metallopeptidase activity. This chain is Mlc titration factor A, found in Escherichia coli O139:H28 (strain E24377A / ETEC).